The sequence spans 624 residues: Atypical kinase COQ8B, mitochondrial (624 aa).

Residues 90–117 (EMPPDFSSKDGRGETSETPVGAATGTIK) are disordered. A helical membrane pass occupies residues 189-205 (LANFGGLAVGLGIGAIA). The KxGQ motif motif lies at 249 to 252 (KIGQ). In terms of domain architecture, Protein kinase spans 285-517 (MHKVLEEELG…ATVLKKSKDL (233 aa)). Residues 310–313 (AAAS) carry the AAAS motif motif. Residues Ser313, Lys331, and 418–421 (MELV) each bind ATP. Residue Asp461 is the Proton acceptor of the active site. Residues Asn466 and Asp480 each coordinate ATP.

Belongs to the protein kinase superfamily. ADCK protein kinase family. In terms of assembly, homodimer; homodimerizes via its transmembrane region. Interacts with the multi-subunit COQ enzyme complex.

Its subcellular location is the mitochondrion membrane. The protein resides in the cytoplasm. It localises to the cytosol. It is found in the cell membrane. The protein operates within cofactor biosynthesis; ubiquinone biosynthesis. In terms of biological role, atypical kinase involved in the biosynthesis of coenzyme Q, also named ubiquinone, an essential lipid-soluble electron transporter for aerobic cellular respiration. Its substrate specificity is still unclear: may act as a protein kinase that mediates phosphorylation of COQ3. According to other reports, acts as a small molecule kinase, possibly a lipid kinase that phosphorylates a prenyl lipid in the ubiquinone biosynthesis pathway, as suggested by its ability to bind coenzyme Q lipid intermediates. However, the small molecule kinase activity was not confirmed by another publication. Required for podocyte migration. This is Atypical kinase COQ8B, mitochondrial from Danio rerio (Zebrafish).